The following is a 250-amino-acid chain: LexA repressor (250 aa).

The span at 1-21 (MTSQERGTRRGDTRGNVRDFP) shows a compositional bias: basic and acidic residues. Residues 1–33 (MTSQERGTRRGDTRGNVRDFPDSPADASGLTQR) form a disordered region. A DNA-binding region (H-T-H motif) is located at residues 54–74 (VREIGEAVGLTSTSSVAHQLK). Active-site for autocatalytic cleavage activity residues include S174 and K211.

It belongs to the peptidase S24 family. In terms of assembly, homodimer.

It carries out the reaction Hydrolysis of Ala-|-Gly bond in repressor LexA.. Functionally, represses a number of genes involved in the response to DNA damage (SOS response), including recA and lexA. In the presence of single-stranded DNA, RecA interacts with LexA causing an autocatalytic cleavage which disrupts the DNA-binding part of LexA, leading to derepression of the SOS regulon and eventually DNA repair. In Parafrankia sp. (strain EAN1pec), this protein is LexA repressor.